Consider the following 395-residue polypeptide: Elongation factor Tu (395 aa).

Positions 10-204 (KPHVNIGTIG…EVDAYIPTPE (195 aa)) constitute a tr-type G domain. Residues 19 to 26 (GHVDHGKT) are G1. 19 to 26 (GHVDHGKT) is a GTP binding site. Position 26 (T26) interacts with Mg(2+). Positions 60 to 64 (GITIS) are G2. Residues 81–84 (DCPG) are G3. Residues 81-85 (DCPGH) and 136-139 (NKCD) contribute to the GTP site. Residues 136 to 139 (NKCD) form a G4 region. Residues 174-176 (SAL) form a G5 region.

It belongs to the TRAFAC class translation factor GTPase superfamily. Classic translation factor GTPase family. EF-Tu/EF-1A subfamily. In terms of assembly, monomer.

Its subcellular location is the cytoplasm. The catalysed reaction is GTP + H2O = GDP + phosphate + H(+). GTP hydrolase that promotes the GTP-dependent binding of aminoacyl-tRNA to the A-site of ribosomes during protein biosynthesis. In Bacillus cereus (strain G9842), this protein is Elongation factor Tu.